Here is a 226-residue protein sequence, read N- to C-terminus: Putative N-acetylmannosamine-6-phosphate 2-epimerase (226 aa).

The protein belongs to the NanE family.

It catalyses the reaction an N-acyl-D-glucosamine 6-phosphate = an N-acyl-D-mannosamine 6-phosphate. It functions in the pathway amino-sugar metabolism; N-acetylneuraminate degradation; D-fructose 6-phosphate from N-acetylneuraminate: step 3/5. Its function is as follows. Converts N-acetylmannosamine-6-phosphate (ManNAc-6-P) to N-acetylglucosamine-6-phosphate (GlcNAc-6-P). This chain is Putative N-acetylmannosamine-6-phosphate 2-epimerase, found in Mycoplasma mycoides subsp. mycoides SC (strain CCUG 32753 / NCTC 10114 / PG1).